The chain runs to 54 residues: Lectin alpha chain (54 aa).

It belongs to the leguminous lectin family. In terms of assembly, tetramer of two alpha and two beta chains.

The protein is Lectin alpha chain of Lathyrus tingitanus (Tangier pea).